The following is a 324-amino-acid chain: Bis(5'-nucleosyl)-tetraphosphatase, symmetrical (324 aa).

Residues 269 to 324 are disordered; sequence PGREVTAPATAPRAPRRPRERQGRQRARGGRGGGNGNGNGGNAAAPAAAPGDAPQE. Over residues 282–297 the composition is skewed to basic residues; sequence APRRPRERQGRQRARG. The segment covering 298–309 has biased composition (gly residues); the sequence is GRGGGNGNGNGG. A compositionally biased stretch (low complexity) spans 310–324; sequence NAAAPAAAPGDAPQE.

This sequence belongs to the Ap4A hydrolase family.

It carries out the reaction P(1),P(4)-bis(5'-adenosyl) tetraphosphate + H2O = 2 ADP + 2 H(+). Its function is as follows. Hydrolyzes diadenosine 5',5'''-P1,P4-tetraphosphate to yield ADP. This Xanthomonas campestris pv. campestris (strain ATCC 33913 / DSM 3586 / NCPPB 528 / LMG 568 / P 25) protein is Bis(5'-nucleosyl)-tetraphosphatase, symmetrical.